A 421-amino-acid chain; its full sequence is Medium-chain specific acyl-CoA dehydrogenase, mitochondrial (421 aa).

The N-terminal 25 residues, 1-25, are a transit peptide targeting the mitochondrion; it reads MIALFRRSCGVLRSLSHFDWRSQHT. Position 69 is an N6-acetyllysine; alternate (Lys69). Lys69 carries the post-translational modification N6-succinyllysine; alternate. An N6-acetyllysine modification is found at Lys79. Residue 158-167 coordinates FAD; the sequence is YCVTEPVAGS. Ser167 provides a ligand contact to octanoyl-CoA. Position 179 is an N6-succinyllysine (Lys179). 191–193 provides a ligand contact to FAD; it reads WIT. Lys212 is modified (N6-acetyllysine; alternate). An N6-succinyllysine; alternate modification is found at Lys212. An octanoyl-CoA-binding site is contributed by Ser216. An N6-acetyllysine; alternate mark is found at Lys217, Lys259, and Lys271. An N6-succinyllysine; alternate mark is found at Lys217, Lys259, and Lys271. Asp278 is a binding site for octanoyl-CoA. Lys279 carries the post-translational modification N6-acetyllysine. Octanoyl-CoA is bound at residue Arg281. At Lys301 the chain carries N6-acetyllysine. Residues 306–308 and 316–317 each bind FAD; these read RKT and HQ. Residues Arg349 and Thr351 each coordinate octanoyl-CoA. Position 351 is a phosphothreonine (Thr351). 374-378 serves as a coordination point for FAD; the sequence is QIFGG. Residue Glu401 coordinates octanoyl-CoA. Glu401 serves as the catalytic Proton acceptor. Residue 402-405 participates in FAD binding; that stretch reads GTAQ.

The protein belongs to the acyl-CoA dehydrogenase family. Homotetramer. Interacts with the heterodimeric electron transfer flavoprotein ETF. It depends on FAD as a cofactor. Acetylated. Could occur at proximity of the cofactor-binding sites and reduce the catalytic activity. Could be deacetylated by SIRT3.

It localises to the mitochondrion matrix. The catalysed reaction is a medium-chain 2,3-saturated fatty acyl-CoA + oxidized [electron-transfer flavoprotein] + H(+) = a medium-chain (2E)-enoyl-CoA + reduced [electron-transfer flavoprotein]. It catalyses the reaction pentanoyl-CoA + oxidized [electron-transfer flavoprotein] + H(+) = (2E)-pentenoyl-CoA + reduced [electron-transfer flavoprotein]. It carries out the reaction hexanoyl-CoA + oxidized [electron-transfer flavoprotein] + H(+) = (2E)-hexenoyl-CoA + reduced [electron-transfer flavoprotein]. The enzyme catalyses octanoyl-CoA + oxidized [electron-transfer flavoprotein] + H(+) = (2E)-octenoyl-CoA + reduced [electron-transfer flavoprotein]. The catalysed reaction is decanoyl-CoA + oxidized [electron-transfer flavoprotein] + H(+) = (2E)-decenoyl-CoA + reduced [electron-transfer flavoprotein]. It catalyses the reaction dodecanoyl-CoA + oxidized [electron-transfer flavoprotein] + H(+) = (2E)-dodecenoyl-CoA + reduced [electron-transfer flavoprotein]. It carries out the reaction tetradecanoyl-CoA + oxidized [electron-transfer flavoprotein] + H(+) = (2E)-tetradecenoyl-CoA + reduced [electron-transfer flavoprotein]. The enzyme catalyses oxidized [electron-transfer flavoprotein] + hexadecanoyl-CoA + H(+) = (2E)-hexadecenoyl-CoA + reduced [electron-transfer flavoprotein]. The protein operates within lipid metabolism; mitochondrial fatty acid beta-oxidation. Its function is as follows. Medium-chain specific acyl-CoA dehydrogenase is one of the acyl-CoA dehydrogenases that catalyze the first step of mitochondrial fatty acid beta-oxidation, an aerobic process breaking down fatty acids into acetyl-CoA and allowing the production of energy from fats. The first step of fatty acid beta-oxidation consists in the removal of one hydrogen from C-2 and C-3 of the straight-chain fatty acyl-CoA thioester, resulting in the formation of trans-2-enoyl-CoA. Electron transfer flavoprotein (ETF) is the electron acceptor that transfers electrons to the main mitochondrial respiratory chain via ETF-ubiquinone oxidoreductase (ETF dehydrogenase). Among the different mitochondrial acyl-CoA dehydrogenases, medium-chain specific acyl-CoA dehydrogenase acts specifically on acyl-CoAs with saturated 6 to 12 carbons long primary chains. The chain is Medium-chain specific acyl-CoA dehydrogenase, mitochondrial from Bos taurus (Bovine).